The sequence spans 611 residues: Phosphomethylpyrimidine synthase (611 aa).

Substrate contacts are provided by residues N212, M241, Y270, H306, 326-328 (SRG), 367-370 (DGLR), and E406. A Zn(2+)-binding site is contributed by H410. Y433 serves as a coordination point for substrate. Position 474 (H474) interacts with Zn(2+). 3 residues coordinate [4Fe-4S] cluster: C554, C557, and C562.

It belongs to the ThiC family. Homodimer. The cofactor is [4Fe-4S] cluster.

The enzyme catalyses 5-amino-1-(5-phospho-beta-D-ribosyl)imidazole + S-adenosyl-L-methionine = 4-amino-2-methyl-5-(phosphooxymethyl)pyrimidine + CO + 5'-deoxyadenosine + formate + L-methionine + 3 H(+). Its pathway is cofactor biosynthesis; thiamine diphosphate biosynthesis. Functionally, catalyzes the synthesis of the hydroxymethylpyrimidine phosphate (HMP-P) moiety of thiamine from aminoimidazole ribotide (AIR) in a radical S-adenosyl-L-methionine (SAM)-dependent reaction. In Bartonella bacilliformis (strain ATCC 35685 / KC583 / Herrer 020/F12,63), this protein is Phosphomethylpyrimidine synthase.